The following is a 532-amino-acid chain: MEIFESFGIEGEVTKQWEPATDEILWCRNESGTLSRMERFRNEPPVGVKWTHGTLQQGRVEEIMKKRITEISGVEVEYSTELSDLTINTRESSNSKASACSVTIRSVADDQEAHRSSETIRARYIIGADGGRSSIRDLMGVAMEGTKGTAIWGVMDILGGSDFPDFGATSVVRSDSDGAVDFVRREEGLTRIYVELNKCAAGWEALERDTITPELILEKCRYIIRPYKLEVDYVEWWSSFTVWQRLSKSMIVHDRVFLVGDAVHTHSPLCGMGMNTGIQDSFNLGWKLAGVVQGQLNYDILQTYETERRPVAEALLDTDRTVLDLFHAPLGPEAEALLAKVPALQVYLGGRGICYHESVLTCRLAQTLGDLTAGECLPDVTVFDYATGRPSSTHSWIKGNGGWAIIVWAGDVSRPSQMNLVQSLSRDMIELRDSLGKSGSMIDFFLIHCSAWPSVELADFPPLFFPTTKTIGRPNGRIFVDEKAVYDGLHISRAEGGVAIVRPDKHIAWAGGLQEVDSLQRYLRQVFRPQPE.

FAD is bound by residues 191–193 (RIY) and aspartate 261.

It belongs to the PheA/TfdB FAD monooxygenase family.

It functions in the pathway secondary metabolite biosynthesis. FAD-dependent monooxygenase; part of the gene cluster that mediates the biosynthesis of hancockiamides, an unusual new family of N-cinnamoylated piperazines. The NRPS hkm10 and the NmrA-like reductase hkm9 are proposed to convert two molecules of L-Phe to the intermediary piperazine called xenocockiamide A. Xenocockiamide A is then converted to hancockiamide D via a series of hydroxylations and O-methylations. The tyrosinase hkm6 may catalyze an aromatic hydroxylation, then the 2-oxoglutarate-dependent Fe(II) dioxygenase hkm4 and the FAD-dependent phenol hydroxylase hkm7 may catalyze consecutive hydroxylations to install 2 more hydroxy groups, and the methyltransferase hkm8 probably catalyzes two methylations using 2 molecules of S-adenosyl-L-methionine (SAM). The NRPS hkm11 activates and transfers trans-cinnamate supplied by the PAL hkm12 to hancockiamide D and produces hancockiamide A. NRPS Hkm11 has the flexibility to tolerate the bulky hancockiamide G as a substrate and the absence of the acetyl-transferase hkm3 opens up the opportunity for hkm11 to introduce a second N-cinnamoyl moiety. The cytochrome P450 monooxygenase hkm5 catalyzes the methylenedioxy bridge formation, converting hancockiamide A into hancockiamide G. Hkm5 can also convert hancockiamide B into hancockiamide C, and hancockiamide D into hancockiamide H. The N-acetyltransferase hkm3 finally transfers an acetyl group to 1-N of piperazine, converting hancockiamide A into hancockiamide B and hancockiamide G into hancockiamide C. The polypeptide is FAD-dependent monooxygenase hkm7 (Aspergillus hancockii).